Here is a 569-residue protein sequence, read N- to C-terminus: Proline--tRNA ligase (569 aa).

The protein belongs to the class-II aminoacyl-tRNA synthetase family. ProS type 1 subfamily. Homodimer.

It localises to the cytoplasm. The catalysed reaction is tRNA(Pro) + L-proline + ATP = L-prolyl-tRNA(Pro) + AMP + diphosphate. Its function is as follows. Catalyzes the attachment of proline to tRNA(Pro) in a two-step reaction: proline is first activated by ATP to form Pro-AMP and then transferred to the acceptor end of tRNA(Pro). As ProRS can inadvertently accommodate and process non-cognate amino acids such as alanine and cysteine, to avoid such errors it has two additional distinct editing activities against alanine. One activity is designated as 'pretransfer' editing and involves the tRNA(Pro)-independent hydrolysis of activated Ala-AMP. The other activity is designated 'posttransfer' editing and involves deacylation of mischarged Ala-tRNA(Pro). The misacylated Cys-tRNA(Pro) is not edited by ProRS. In Legionella pneumophila subsp. pneumophila (strain Philadelphia 1 / ATCC 33152 / DSM 7513), this protein is Proline--tRNA ligase.